A 237-amino-acid polypeptide reads, in one-letter code: N-(5'-phosphoribosyl)anthranilate isomerase (237 aa).

It belongs to the TrpF family.

The catalysed reaction is N-(5-phospho-beta-D-ribosyl)anthranilate = 1-(2-carboxyphenylamino)-1-deoxy-D-ribulose 5-phosphate. It participates in amino-acid biosynthesis; L-tryptophan biosynthesis; L-tryptophan from chorismate: step 3/5. This Desulfitobacterium hafniense (strain Y51) protein is N-(5'-phosphoribosyl)anthranilate isomerase.